The chain runs to 862 residues: Eukaryotic translation initiation factor 3 subunit C (862 aa).

The span at 1–10 (MSRFFYGGGS) shows a compositional bias: gly residues. The interval 1-81 (MSRFFYGGGS…DEEKTTVVKS (81 aa)) is disordered. Over residues 16 to 52 (SSDEEELYERDEEEQSEEEESSEEEETSEEGSDDEEG) the composition is skewed to acidic residues. In terms of domain architecture, PCI spans 601-775 (FHMHINLELL…GAIVFRKGVE (175 aa)). The disordered stretch occupies residues 814–862 (RDQGAGARGGRGGGRGGHARGGARFPGQQGRRPGGQQFGGGALGGAIKA). The span at 819–833 (GARGGRGGGRGGHAR) shows a compositional bias: gly residues. Residues 835–844 (GARFPGQQGR) show a composition bias toward low complexity. The segment covering 845–862 (RPGGQQFGGGALGGAIKA) has biased composition (gly residues).

The protein belongs to the eIF-3 subunit C family. Component of the eukaryotic translation initiation factor 3 (eIF-3) complex.

The protein resides in the cytoplasm. Its function is as follows. Component of the eukaryotic translation initiation factor 3 (eIF-3) complex, which is involved in protein synthesis of a specialized repertoire of mRNAs and, together with other initiation factors, stimulates binding of mRNA and methionyl-tRNAi to the 40S ribosome. The eIF-3 complex specifically targets and initiates translation of a subset of mRNAs involved in cell proliferation. The chain is Eukaryotic translation initiation factor 3 subunit C (nip1) from Aspergillus clavatus (strain ATCC 1007 / CBS 513.65 / DSM 816 / NCTC 3887 / NRRL 1 / QM 1276 / 107).